A 422-amino-acid polypeptide reads, in one-letter code: ATP phosphoribosyltransferase regulatory subunit (422 aa).

This sequence belongs to the class-II aminoacyl-tRNA synthetase family. HisZ subfamily. As to quaternary structure, heteromultimer composed of HisG and HisZ subunits.

The protein localises to the cytoplasm. The protein operates within amino-acid biosynthesis; L-histidine biosynthesis; L-histidine from 5-phospho-alpha-D-ribose 1-diphosphate: step 1/9. Its function is as follows. Required for the first step of histidine biosynthesis. May allow the feedback regulation of ATP phosphoribosyltransferase activity by histidine. The sequence is that of ATP phosphoribosyltransferase regulatory subunit from Clostridium botulinum (strain Langeland / NCTC 10281 / Type F).